The chain runs to 192 residues: dTTP/UTP pyrophosphatase (192 aa).

D71 serves as the catalytic Proton acceptor.

This sequence belongs to the Maf family. YhdE subfamily. A divalent metal cation is required as a cofactor.

It localises to the cytoplasm. It carries out the reaction dTTP + H2O = dTMP + diphosphate + H(+). It catalyses the reaction UTP + H2O = UMP + diphosphate + H(+). Its function is as follows. Nucleoside triphosphate pyrophosphatase that hydrolyzes dTTP and UTP. May have a dual role in cell division arrest and in preventing the incorporation of modified nucleotides into cellular nucleic acids. The protein is dTTP/UTP pyrophosphatase of Clostridium tetani (strain Massachusetts / E88).